Here is a 222-residue protein sequence, read N- to C-terminus: Cysteine protease inhibitor 1 (222 aa).

Residues 1 to 26 (MKSINILSFLLLSSTLSLVAFARSFT) form the signal peptide. Positions 27 to 42 (SENPIVLPTTCHDDDN) are excised as a propeptide. Positions 29–34 (NPIVLP) match the Vacuolar targeting signal motif. Intrachain disulfides connect cysteine 84–cysteine 136 and cysteine 185–cysteine 191.

This sequence belongs to the protease inhibitor I3 (leguminous Kunitz-type inhibitor) family. As to expression, tubers, leaves.

The protein localises to the vacuole. Potent inhibitor of cathepsin l (cysteine protease). Does not inhibit trypsin or chymotrypsin (serine proteases). May protect the plant by inhibiting proteases of invading organisms. This is Cysteine protease inhibitor 1 from Solanum tuberosum (Potato).